We begin with the raw amino-acid sequence, 284 residues long: Probable endonuclease 4 (284 aa).

Zn(2+) contacts are provided by H69, H109, E145, D179, H182, H216, D229, H231, and E261.

It belongs to the AP endonuclease 2 family. Zn(2+) is required as a cofactor.

It catalyses the reaction Endonucleolytic cleavage to 5'-phosphooligonucleotide end-products.. Functionally, endonuclease IV plays a role in DNA repair. It cleaves phosphodiester bonds at apurinic or apyrimidinic (AP) sites, generating a 3'-hydroxyl group and a 5'-terminal sugar phosphate. This is Probable endonuclease 4 from Chlorobium phaeobacteroides (strain BS1).